Reading from the N-terminus, the 456-residue chain is Decaprenyl-diphosphate synthase (456 aa).

Residues lysine 183, arginine 186, and histidine 216 each coordinate isopentenyl diphosphate. Mg(2+) is bound by residues aspartate 223 and aspartate 227. Residue arginine 233 coordinates isopentenyl diphosphate.

Belongs to the FPP/GGPP synthase family. The cofactor is Mg(2+).

It localises to the mitochondrion. It catalyses the reaction 7 isopentenyl diphosphate + (2E,6E)-farnesyl diphosphate = all-trans-decaprenyl diphosphate + 7 diphosphate. It participates in cofactor biosynthesis; ubiquinone biosynthesis. Supplies decaprenyl diphosphate, the precursor for the side chain of the isoprenoid quinones ubiquinone-10. This Dictyostelium discoideum (Social amoeba) protein is Decaprenyl-diphosphate synthase (coq1).